Consider the following 1378-residue polypeptide: S-cell enriched with leucine-rich repeat-containing protein slrA (1378 aa).

A helical membrane pass occupies residues 17 to 37; that stretch reads IFKILYCYLFTSLLLILSTWV. Asn-59, Asn-112, Asn-143, Asn-172, and Asn-201 each carry an N-linked (GlcNAc...) asparagine glycan. LRR repeat units follow at residues 143 to 165, 167 to 188, 191 to 212, 213 to 235, 236 to 257, 260 to 281, 282 to 304, 307 to 329, and 331 to 353; these read NLTG…LPYL, HLRN…GLLK, SLVA…ADSK, AISY…WKTP, NLLF…EFFR, SLDY…LSKS, RISY…TCWK, SLRI…IFDH, and PLQY…LDCA. Asn-265, Asn-287, and Asn-296 each carry an N-linked (GlcNAc...) asparagine glycan. Residues Asn-416, Asn-436, Asn-451, Asn-491, Asn-513, Asn-596, Asn-605, Asn-634, Asn-704, Asn-710, Asn-740, Asn-741, Asn-771, Asn-788, Asn-801, Asn-826, Asn-843, Asn-861, Asn-875, and Asn-907 are each glycosylated (N-linked (GlcNAc...) asparagine). The stretch at 886–946 forms a coiled coil; it reads SLNNNNNNNN…NNNENNNENK (61 aa). Residues 891 to 909 show a composition bias toward low complexity; the sequence is NNNNNNNNNKNNNNNNNDS. The tract at residues 891–945 is disordered; that stretch reads NNNNNNNNNKNNNNNNNDSNNEKEVVEDEEEDLDYSSQNDNNNINNNNNENNNEN. Residues 915–924 are compositionally biased toward acidic residues; it reads VVEDEEEDLD. Low complexity predominate over residues 929-945; the sequence is NDNNNINNNNNENNNEN. Asn-953, Asn-970, Asn-1090, and Asn-1100 each carry an N-linked (GlcNAc...) asparagine glycan. The helical transmembrane segment at 1160–1180 threads the bilayer; the sequence is YYIVFFGCASGLILVLVICIV. Low complexity predominate over residues 1227–1276; it reads DLNNNNNNNNNNNNNNNNNNNNNNNNNNNNNNNNNFNDGSDTFNNNNKKN. A disordered region spans residues 1227–1378; that stretch reads DLNNNNNNNN…KKHLTIINKK (152 aa). Residues 1289–1304 show a composition bias toward basic and acidic residues; sequence DGKENDIKNINNKKDE. Residues 1305–1324 show a composition bias toward acidic residues; the sequence is KEDDGDDDDDEDDDEYEDDT. The span at 1328–1353 shows a compositional bias: low complexity; sequence SSGNSSRSKGSDGGSSSNSLSSDKQS. N-linked (GlcNAc...) asparagine glycans are attached at residues Asn-1331 and Asn-1360. A compositionally biased stretch (polar residues) spans 1354 to 1364; that stretch reads FNNGNENNSII. Residues 1368 to 1378 are compositionally biased toward basic residues; sequence KKKHLTIINKK.

The protein resides in the membrane. The protein is S-cell enriched with leucine-rich repeat-containing protein slrA (slrA) of Dictyostelium discoideum (Social amoeba).